Here is a 200-residue protein sequence, read N- to C-terminus: LHFPL tetraspan subfamily member 6 protein (200 aa).

The first 23 residues, 1-23 (MASSLTCTGVIWALLSFLSAATS), serve as a signal peptide directing secretion. Transmembrane regions (helical) follow at residues 84–104 (ICTIVTGLGCGLLLLVALTAL), 123–143 (GIQFLGGLLIGAGCALYPLGW), and 166–186 (IGWAYYCTGAGAAAAMLLCTW).

The protein belongs to the LHFP family.

The protein localises to the membrane. In Mus musculus (Mouse), this protein is LHFPL tetraspan subfamily member 6 protein.